Reading from the N-terminus, the 891-residue chain is Nitrate reductase [NAD(P)H] (891 aa).

Residues methionine 1–serine 78 form a disordered region. Positions leucine 63–alanine 76 are enriched in basic and acidic residues. Mo-molybdopterin is bound at residue cysteine 168. Residues serine 515–isoleucine 590 enclose the Cytochrome b5 heme-binding domain. The heme site is built by histidine 550 and histidine 573. In terms of domain architecture, FAD-binding FR-type spans arginine 630 to alanine 742. Residues arginine 682–threonine 685, leucine 699–tyrosine 703, phenylalanine 704, phenylalanine 711, leucine 716–serine 718, and threonine 769 each bind FAD.

This sequence belongs to the nitrate reductase family. Homodimer. FAD serves as cofactor. It depends on heme as a cofactor. Mo-molybdopterin is required as a cofactor.

It catalyses the reaction nitrite + NAD(+) + H2O = nitrate + NADH + H(+). The catalysed reaction is nitrite + NADP(+) + H2O = nitrate + NADPH + H(+). Its function is as follows. Nitrate reductase is a key enzyme involved in the first step of nitrate assimilation in plants, fungi and bacteria. This chain is Nitrate reductase [NAD(P)H] (NAR-7), found in Hordeum vulgare (Barley).